We begin with the raw amino-acid sequence, 201 residues long: Potassium-transporting ATPase KdpC subunit (201 aa).

The chain crosses the membrane as a helical span at residues 10 to 30 (VLLVALTAVTGLAYPLAVTGI).

This sequence belongs to the KdpC family. In terms of assembly, the system is composed of three essential subunits: KdpA, KdpB and KdpC.

The protein resides in the cell inner membrane. Its function is as follows. Part of the high-affinity ATP-driven potassium transport (or Kdp) system, which catalyzes the hydrolysis of ATP coupled with the electrogenic transport of potassium into the cytoplasm. This subunit acts as a catalytic chaperone that increases the ATP-binding affinity of the ATP-hydrolyzing subunit KdpB by the formation of a transient KdpB/KdpC/ATP ternary complex. In Methylorubrum extorquens (strain PA1) (Methylobacterium extorquens), this protein is Potassium-transporting ATPase KdpC subunit.